The following is an 868-amino-acid chain: Muscle, skeletal receptor tyrosine-protein kinase (868 aa).

The first 21 residues, 1–21, serve as a signal peptide directing secretion; it reads MRELVNIPLLQMLTLVAFSGT. Over 22–494 the chain is Extracellular; sequence EKLPKAPVIT…FAVSPAYSMT (473 aa). 3 consecutive Ig-like domains span residues 28-116, 121-205, and 212-302; these read PVIT…GALQ, PKIT…KLVK, and ARIL…ATVS. Cystine bridges form between Cys-49–Cys-99, Cys-98–Cys-112, and Cys-142–Cys-190. The N-linked (GlcNAc...) asparagine glycan is linked to Asn-222. Disulfide bonds link Cys-233/Cys-282, Cys-317/Cys-382, Cys-325/Cys-375, Cys-366/Cys-406, Cys-394/Cys-447, and Cys-398/Cys-434. Positions 312 to 450 constitute an FZ domain; it reads DSQGYCAQYR…HRDPTACTRL (139 aa). Asn-338 is a glycosylation site (N-linked (GlcNAc...) asparagine). Residue Asn-459 is glycosylated (N-linked (GlcNAc...) asparagine). Residues 495-515 form a helical membrane-spanning segment; that stretch reads VIISIVSSFALFALLTIATLY. At 516-868 the chain is on the cytoplasmic side; the sequence is CCRRRKEWKN…CERAEGTVGV (353 aa). A Phosphotyrosine; by autocatalysis modification is found at Tyr-553. The Protein kinase domain maps to 574–855; that stretch reads IEYVRDIGEG…PSFCSIHRIL (282 aa). ATP-binding positions include 580-588 and Lys-608; that span reads IGEGAFGRV. 2 positions are modified to phosphoserine; by CK2: Ser-680 and Ser-697. Asp-724 (proton acceptor) is an active-site residue. Tyr-754 is subject to Phosphotyrosine; by autocatalysis.

It belongs to the protein kinase superfamily. Tyr protein kinase family. As to quaternary structure, monomer. Homodimer. Interacts with LRP4; the heterodimer forms an AGRIN receptor complex that binds AGRIN resulting in activation of MUSK. Forms a heterotetramer composed of 2 DOK7 and 2 MUSK molecules which facilitates MUSK trans-autophosphorylation on tyrosine residue and activation. Interacts (via cytoplasmic part) with DOK7 (via IRS-type PTB domain); requires MUSK phosphorylation. Interacts with DVL1 (via DEP domain); the interaction is direct and mediates the formation of a DVL1, MUSK and PAK1 ternary complex involved in AChR clustering. Interacts with PDZRN3; this interaction is enhanced by agrin. Interacts with FNTA; the interaction is direct and mediates AGRIN-induced phosphorylation and activation of FNTA. Interacts with CSNK2B; mediates regulation by CK2. Interacts (via the cytoplasmic domain) with DNAJA3. Interacts with NSF; may regulate MUSK endocytosis and activity. Interacts with CAV3; may regulate MUSK signaling. Interacts with RNF31. It depends on Mg(2+) as a cofactor. Ubiquitinated by PDZRN3. Ubiquitination promotes endocytosis and lysosomal degradation. Post-translationally, phosphorylated. Phosphorylation is induced by AGRIN. Autophosphorylated. Autophosphorylation at Tyr-553 is required for interaction with DOK7 which in turn stimulates the phosphorylation and the activation of MUSK. In terms of processing, neddylated. As to expression, expressed preferentially in skeletal muscle.

The protein resides in the postsynaptic cell membrane. It catalyses the reaction L-tyrosyl-[protein] + ATP = O-phospho-L-tyrosyl-[protein] + ADP + H(+). Its activity is regulated as follows. Positively regulated by CK2. In terms of biological role, receptor tyrosine kinase which plays a central role in the formation and the maintenance of the neuromuscular junction (NMJ), the synapse between the motor neuron and the skeletal muscle. Recruitment of AGRIN by LRP4 to the MUSK signaling complex induces phosphorylation and activation of MUSK, the kinase of the complex. The activation of MUSK in myotubes regulates the formation of NMJs through the regulation of different processes including the specific expression of genes in subsynaptic nuclei, the reorganization of the actin cytoskeleton and the clustering of the acetylcholine receptors (AChR) in the postsynaptic membrane. May regulate AChR phosphorylation and clustering through activation of ABL1 and Src family kinases which in turn regulate MUSK. DVL1 and PAK1 that form a ternary complex with MUSK are also important for MUSK-dependent regulation of AChR clustering. May positively regulate Rho family GTPases through FNTA. Mediates the phosphorylation of FNTA which promotes prenylation, recruitment to membranes and activation of RAC1 a regulator of the actin cytoskeleton and of gene expression. Other effectors of the MUSK signaling include DNAJA3 which functions downstream of MUSK. May also play a role within the central nervous system by mediating cholinergic responses, synaptic plasticity and memory formation. This chain is Muscle, skeletal receptor tyrosine-protein kinase (Musk), found in Mus musculus (Mouse).